Consider the following 246-residue polypeptide: Chloroplastic group IIB intron splicing facilitator CRS2-A, chloroplastic (246 aa).

A chloroplast-targeting transit peptide spans 1-34; sequence MFCASSSPITSPLYPKAYKFSQTKSNSKRFSSLR. A tRNA-binding site is contributed by Tyr64. Catalysis depends on His69, which acts as the Proton acceptor. Positions 114, 116, and 162 each coordinate tRNA.

The protein belongs to the PTH family. CRS2 subfamily. In terms of assembly, part of large ribonucleo-protein complexes that include group IIB introns and either CAF1 or CAF2.

The protein resides in the plastid. Its subcellular location is the chloroplast stroma. Functionally, required for the splicing of group IIB introns in chloroplasts. This Arabidopsis thaliana (Mouse-ear cress) protein is Chloroplastic group IIB intron splicing facilitator CRS2-A, chloroplastic (CRS2A).